The chain runs to 219 residues: Orotate phosphoribosyltransferase (219 aa).

Lys-26 is a binding site for 5-phospho-alpha-D-ribose 1-diphosphate. An orotate-binding site is contributed by 34–35 (FF). 5-phospho-alpha-D-ribose 1-diphosphate is bound by residues 72–73 (YK), Arg-98, Lys-99, Lys-102, His-104, and 124–132 (DDVITAGTA). Thr-128 and Arg-156 together coordinate orotate.

This sequence belongs to the purine/pyrimidine phosphoribosyltransferase family. PyrE subfamily. Homodimer. The cofactor is Mg(2+).

The catalysed reaction is orotidine 5'-phosphate + diphosphate = orotate + 5-phospho-alpha-D-ribose 1-diphosphate. The protein operates within pyrimidine metabolism; UMP biosynthesis via de novo pathway; UMP from orotate: step 1/2. Its function is as follows. Catalyzes the transfer of a ribosyl phosphate group from 5-phosphoribose 1-diphosphate to orotate, leading to the formation of orotidine monophosphate (OMP). The polypeptide is Orotate phosphoribosyltransferase (Xanthomonas campestris pv. campestris (strain 8004)).